A 632-amino-acid polypeptide reads, in one-letter code: Polynucleotide 5'-hydroxyl-kinase GRC3 (632 aa).

The disordered stretch occupies residues methionine 1–threonine 42. A compositionally biased stretch (polar residues) spans asparagine 26–threonine 42. Position 246-253 (glycine 246–serine 253) interacts with ATP.

The protein belongs to the Clp1 family. NOL9/GRC3 subfamily.

The protein localises to the nucleus. It is found in the nucleolus. In terms of biological role, polynucleotide 5'-kinase involved in rRNA processing. Required for the efficient termination by RNA polymerase I and the processing of the IST2 pre-rRNA internal transcribed spacer localized between the 5.8S and 25S rRNAs. May act by maintaining the phosphorylated status of the downstream RNT1 cleavage product, which in turn allows the torpedo activity of RAT1 to efficiently terminate Pol I transcription. In vitro, displays polynucleotide kinase activity on both single- and double-stranded RNA and on single-stranded DNA alone, but not double-stranded DNA alone. This Saccharomyces cerevisiae (strain ATCC 204508 / S288c) (Baker's yeast) protein is Polynucleotide 5'-hydroxyl-kinase GRC3 (GRC3).